The sequence spans 256 residues: Protein TV0584 (256 aa).

The protein belongs to the CinA family.

In Thermoplasma volcanium (strain ATCC 51530 / DSM 4299 / JCM 9571 / NBRC 15438 / GSS1), this protein is Protein TV0584.